Reading from the N-terminus, the 219-residue chain is MRFSGMDMKGINMLFAAIPSICASSPKKISIYNEEMIVARCFIGFLILSWKSLGKTFKETLDGRIESIQESLQQFFNPNEVILEESNEQQRLLNLWISLRICSTVKVVESLPAARCAPKCEKTVQALLCRNLNVKSATLLNATSSRRIRLQDDIVTGFHFSVSERLVSGSTTLVEASTVEQIREAFLLEPRDLIREGFIVLRKVRVGGIPGTCGDGVGL.

The chain crosses the membrane as a helical span at residues 29 to 49; that stretch reads ISIYNEEMIVARCFIGFLILS.

Belongs to the ATPase protein MI25 family. As to quaternary structure, F-type ATPases have 2 components, CF(1) - the catalytic core - and CF(0) - the membrane proton channel. CF(1) has five subunits: alpha(3), beta(3), gamma(1), delta(1), epsilon(1). CF(0) has three main subunits: a, b and c.

The protein localises to the mitochondrion membrane. This is one of the chains of the nonenzymatic component (CF(0) subunit) of the mitochondrial ATPase complex. This chain is ATP synthase protein MI25, found in Zea mays (Maize).